We begin with the raw amino-acid sequence, 425 residues long: Probable proline--tRNA ligase, mitochondrial (425 aa).

The protein belongs to the class-II aminoacyl-tRNA synthetase family.

The protein resides in the mitochondrion. The catalysed reaction is tRNA(Pro) + L-proline + ATP = L-prolyl-tRNA(Pro) + AMP + diphosphate. This chain is Probable proline--tRNA ligase, mitochondrial, found in Schizosaccharomyces pombe (strain 972 / ATCC 24843) (Fission yeast).